A 595-amino-acid polypeptide reads, in one-letter code: Putative terpenoid synthase 16 (595 aa).

Mg(2+) contacts are provided by aspartate 349, aspartate 353, asparagine 494, and aspartate 502. The DDXXD motif signature appears at 349–353 (DDTCD).

This sequence belongs to the terpene synthase family. Tpsa subfamily. The cofactor is Mg(2+). Mn(2+) serves as cofactor.

The protein localises to the cytoplasm. It functions in the pathway secondary metabolite biosynthesis; terpenoid biosynthesis. This chain is Putative terpenoid synthase 16 (TPS16), found in Arabidopsis thaliana (Mouse-ear cress).